We begin with the raw amino-acid sequence, 133 residues long: Small ribosomal subunit protein uS9 (133 aa).

Residues 114-133 (VERKKYGKKKARRSPQFSKR) are disordered. Over residues 118-133 (KYGKKKARRSPQFSKR) the composition is skewed to basic residues.

The protein belongs to the universal ribosomal protein uS9 family.

The protein is Small ribosomal subunit protein uS9 of Fusobacterium nucleatum subsp. nucleatum (strain ATCC 25586 / DSM 15643 / BCRC 10681 / CIP 101130 / JCM 8532 / KCTC 2640 / LMG 13131 / VPI 4355).